The following is a 198-amino-acid chain: Succinate dehydrogenase [ubiquinone] cytochrome b subunit, mitochondrial (198 aa).

The transit peptide at 1 to 50 directs the protein to the mitochondrion; the sequence is MSAMMVKLGLNKSALLLKPSAFSRAAALSSSRRLLFNTARTNFLSTSPLK. At 51–99 the chain is on the mitochondrial matrix side; it reads NVASEMNTKAAIAEEQILNKQRAKRPISPHLTIYQPQLTWYLSSLHRIS. A ubiquinone contacts are provided by S93 and R97. A helical transmembrane segment spans residues 100-120; sequence LVLMGLGFYLFTILFGVSGLL. The Mitochondrial intermembrane portion of the chain corresponds to 121-139; sequence GLGLTTEKVSNWYHQKFSK. A helical membrane pass occupies residues 140–160; the sequence is ITEWSIKGSFAYLFAIHYGGA. H156 serves as a coordination point for heme. The Mitochondrial matrix portion of the chain corresponds to 161–175; that stretch reads IRHLIWDTAKELTLK. Residues 176-196 form a helical membrane-spanning segment; sequence GVYRTGYALIGFTAVLGTYLL. Residues 197 to 198 are Mitochondrial intermembrane-facing; the sequence is TL.

Belongs to the cytochrome b560 family. Forms part of complex II containing four subunits: a flavoprotein (FP), an iron-sulfur protein (IP) and a cytochrome b composed of two integral membrane proteins. Heme serves as cofactor.

It localises to the mitochondrion inner membrane. Its pathway is carbohydrate metabolism; tricarboxylic acid cycle. Membrane-anchoring mono-heme cytochrome b subunit of succinate dehydrogenase (SDH) that is involved in system II of the mitochondrial electron transport chain and is responsible for transferring electrons from succinate to ubiquinone (coenzyme Q). SDH3 and SDH4 form the membrane dimer that anchors the catalytic dimer formed by SDH1 and SDH2 to the matrix surface of the mitochondrial inner membrane. Electrons originating from the catalytic dimer enter the membrane dimer for ubiquinone reduction. The polypeptide is Succinate dehydrogenase [ubiquinone] cytochrome b subunit, mitochondrial (SDH3) (Saccharomyces cerevisiae (strain ATCC 204508 / S288c) (Baker's yeast)).